The primary structure comprises 605 residues: DNA primase (605 aa).

The CHC2-type zinc finger occupies 38-62; sequence CPFHDEKTPSFTVSEDKQICHCFGC. The Toprim domain occupies 260–341; the sequence is DEIVLLEGFM…NVFVIQLPSG (82 aa). The Mg(2+) site is built by E266, D310, and D312.

This sequence belongs to the DnaG primase family. Monomer. Interacts with DnaB. Zn(2+) serves as cofactor. Mg(2+) is required as a cofactor.

The catalysed reaction is ssDNA + n NTP = ssDNA/pppN(pN)n-1 hybrid + (n-1) diphosphate.. Its function is as follows. RNA polymerase that catalyzes the synthesis of short RNA molecules used as primers for DNA polymerase during DNA replication. This Staphylococcus aureus (strain Mu50 / ATCC 700699) protein is DNA primase.